A 354-amino-acid polypeptide reads, in one-letter code: Histidinol-phosphate aminotransferase (354 aa).

Lys222 is subject to N6-(pyridoxal phosphate)lysine.

It belongs to the class-II pyridoxal-phosphate-dependent aminotransferase family. Histidinol-phosphate aminotransferase subfamily. Homodimer. The cofactor is pyridoxal 5'-phosphate.

It carries out the reaction L-histidinol phosphate + 2-oxoglutarate = 3-(imidazol-4-yl)-2-oxopropyl phosphate + L-glutamate. It participates in amino-acid biosynthesis; L-histidine biosynthesis; L-histidine from 5-phospho-alpha-D-ribose 1-diphosphate: step 7/9. This is Histidinol-phosphate aminotransferase from Leuconostoc citreum (strain KM20).